Reading from the N-terminus, the 222-residue chain is Putative adhesin RP828 (222 aa).

A signal peptide spans 1–22 (MKKLLLIATASATILSSSVSFA).

Its function is as follows. Adheres to biotinylated epithelial (Vero cell) proteins. The protein is Putative adhesin RP828 of Rickettsia prowazekii (strain Madrid E).